The following is a 792-amino-acid chain: uncharacterized protein (792 aa).

Residue 361–362 participates in substrate binding; the sequence is WD. Catalysis depends on glutamate 488, which acts as the Proton donor. 590–591 lines the substrate pocket; sequence KQ. The segment at 753-792 is disordered; that stretch reads DSPSTIAVRDRKPLLPPPSQPPGREPVSRRHKSLIISAAR. Residues 766-776 show a composition bias toward pro residues; the sequence is LLPPPSQPPGR.

It belongs to the glycosyl hydrolase 65 family.

This is an uncharacterized protein from Mycobacterium leprae (strain TN).